We begin with the raw amino-acid sequence, 346 residues long: Guanine nucleotide-binding protein subunit beta-2 (346 aa).

WD repeat units lie at residues 57-96 (GHIN…KVQI), 99-138 (LRSA…ASGV), 147-185 (GYEG…KTMD), 188-227 (GHAG…HKQM), 230-269 (GHDM…QIAQ), 274-313 (QKNT…HTGT), and 316-346 (GHEN…RLWL).

The protein belongs to the WD repeat G protein beta family. G proteins are composed of 3 units, alpha, beta and gamma. Interacts with Ggamma30A/Guanine nucleotide-binding protein subunit gamma-e. As to expression, expressed exclusively in photoreceptor cells in the compound eye (at protein level).

The protein resides in the cytoplasm. It is found in the cell projection. It localises to the axon. The protein localises to the rhabdomere. Its function is as follows. Guanine nucleotide-binding proteins (G proteins) are involved as a modulator or transducer in various transmembrane signaling systems. The beta and gamma chains are required for the GTPase activity, for replacement of GDP by GTP, and for G protein-effector interaction. The sequence is that of Guanine nucleotide-binding protein subunit beta-2 (Gbeta76C) from Drosophila melanogaster (Fruit fly).